Consider the following 113-residue polypeptide: Ribosome-associated factor Y (113 aa).

An N6-acetyllysine modification is found at Lys66. The segment at 91-113 is disordered; sequence KGEARRAATSVKDANFVEEVEEE.

Belongs to the HPF/YfiA ribosome-associated protein family. YfiA subfamily. As to quaternary structure, associates mainly with 70S ribosomes.

Its function is as follows. During stationary phase, prevents 70S dimer formation, probably in order to regulate translation efficiency during transition between the exponential and the stationary phases. In addition, during environmental stress such as cold shock or excessive cell density at stationary phase, stabilizes the 70S ribosome against dissociation, inhibits translation initiation and increase translation accuracy. When normal growth conditions are restored, is quickly released from the ribosome. The chain is Ribosome-associated factor Y from Escherichia coli O157:H7.